Here is a 408-residue protein sequence, read N- to C-terminus: Phosphopentomutase (408 aa).

Mn(2+) is bound by residues aspartate 10, aspartate 303, histidine 308, aspartate 344, histidine 345, and histidine 356.

It belongs to the phosphopentomutase family. Mn(2+) is required as a cofactor.

It is found in the cytoplasm. The catalysed reaction is 2-deoxy-alpha-D-ribose 1-phosphate = 2-deoxy-D-ribose 5-phosphate. It catalyses the reaction alpha-D-ribose 1-phosphate = D-ribose 5-phosphate. Its pathway is carbohydrate degradation; 2-deoxy-D-ribose 1-phosphate degradation; D-glyceraldehyde 3-phosphate and acetaldehyde from 2-deoxy-alpha-D-ribose 1-phosphate: step 1/2. Isomerase that catalyzes the conversion of deoxy-ribose 1-phosphate (dRib-1-P) and ribose 1-phosphate (Rib-1-P) to deoxy-ribose 5-phosphate (dRib-5-P) and ribose 5-phosphate (Rib-5-P), respectively. The chain is Phosphopentomutase from Tolumonas auensis (strain DSM 9187 / NBRC 110442 / TA 4).